Consider the following 249-residue polypeptide: Vesicle-associated membrane protein-associated protein A (249 aa).

Alanine 2 carries the N-acetylalanine modification. At 2–227 (ASASGAMAKH…VSFRDNVTSP (226 aa)) the chain is on the cytoplasmic side. One can recognise an MSP domain in the interval 14–131 (ILVLDPPSDL…MDSKLRCVFE (118 aa)). Positions 50–53 (KVKT) are phosphorylated FFAT motif binding. Residue lysine 125 is modified to N6-acetyllysine. Positions 135–144 (ENDKLNDMEP) are enriched in basic and acidic residues. The disordered stretch occupies residues 135 to 166 (ENDKLNDMEPSKAVPLNASKQDGPLPKPHSVS). Position 166 is a phosphoserine (serine 166). The stretch at 168-207 (NDTETRKLMEECKRLQGEMMKLSEENRHLRDEGLRLRKVA) forms a coiled coil. Threonine 170 is modified (phosphothreonine). Serine 214, serine 216, and serine 219 each carry phosphoserine. A helical; Anchor for type IV membrane protein membrane pass occupies residues 228–248 (LPSLLVVIAAIFIGFFLGKFI).

It belongs to the VAMP-associated protein (VAP) (TC 9.B.17) family. As to quaternary structure, homodimer; disulfide-linked. Heterodimer with VAPB. Interacts with VAMP1, VAMP2, STX1A, BET1, SEC22C and with the C-terminal domain of OCLN. Interacts (via MSP domain) with OSBPL1A (via FFAT motif). Interacts (via MSP domain) with ZFYVE27; may retain ZFYVE27 in the endoplasmic reticulum and regulate its function in cell projections formation. Interacts with OSBP. Interacts (via C-terminus) with RSAD2/viperin (via C-terminus). Interacts with IFITM3. Interacts with OSBPL3 (phosphorylated form). Interacts with KIF5A in a ZFYVE27-dependent manner. Interacts (via MSP domain) with STARD3 (via phosphorylated FFAT motif); this interaction recruits VAPA to the endosome. Interacts with STARD3NL (via FFAT motif). Interacts with CERT1. Interacts with PLEKHA3 and SACM1L to form a ternary complex. Interacts with VPS13A (via FFAT motif). Interacts with RB1CC1 (via phosphorylated FFAT motif), MIGA2 (via phosphorylated FFAT motif), RMDN3 (via phosphorylated FFAT motif), KCNB1 (via phosphorylated FFAT motif) and KCNB2 (via phosphorylated FFAT motif). Interacts (via MSP domain) with WDR44; the interactions connect the endoplasmic reticulum (ER) with the endosomal tubule. In terms of tissue distribution, ubiquitous.

The protein localises to the endoplasmic reticulum membrane. It localises to the cell membrane. It is found in the cell junction. Its subcellular location is the tight junction. The protein resides in the nucleus membrane. Functionally, endoplasmic reticulum (ER)-anchored protein that mediates the formation of contact sites between the ER and endosomes via interaction with FFAT motif-containing proteins such as STARD3 or WDR44. STARD3-VAPA interaction enables cholesterol transfer from the ER to endosomes. Via interaction with WDR44 participates in neosynthesized protein export. In addition, recruited to the plasma membrane through OSBPL3 binding. The OSBPL3-VAPA complex stimulates RRAS signaling which in turn attenuates integrin beta-1 (ITGB1) activation at the cell surface. With OSBPL3, may regulate ER morphology. May play a role in vesicle trafficking. The sequence is that of Vesicle-associated membrane protein-associated protein A from Rattus norvegicus (Rat).